Here is a 217-residue protein sequence, read N- to C-terminus: Small ribosomal subunit protein uS3 (217 aa).

Positions 38-106 (IRKFINKELA…QVHINIIEIK (69 aa)) constitute a KH type-2 domain.

Belongs to the universal ribosomal protein uS3 family. Part of the 30S ribosomal subunit. Forms a tight complex with proteins S10 and S14.

In terms of biological role, binds the lower part of the 30S subunit head. Binds mRNA in the 70S ribosome, positioning it for translation. This is Small ribosomal subunit protein uS3 from Streptococcus pyogenes serotype M6 (strain ATCC BAA-946 / MGAS10394).